The following is a 249-amino-acid chain: Deoxyribose-phosphate aldolase (249 aa).

Catalysis depends on aspartate 105, which acts as the Proton donor/acceptor. Lysine 168 functions as the Schiff-base intermediate with acetaldehyde in the catalytic mechanism. Lysine 216 acts as the Proton donor/acceptor in catalysis.

It belongs to the DeoC/FbaB aldolase family. DeoC type 1 subfamily.

It localises to the cytoplasm. It catalyses the reaction 2-deoxy-D-ribose 5-phosphate = D-glyceraldehyde 3-phosphate + acetaldehyde. The protein operates within carbohydrate degradation; 2-deoxy-D-ribose 1-phosphate degradation; D-glyceraldehyde 3-phosphate and acetaldehyde from 2-deoxy-alpha-D-ribose 1-phosphate: step 2/2. Its function is as follows. Catalyzes a reversible aldol reaction between acetaldehyde and D-glyceraldehyde 3-phosphate to generate 2-deoxy-D-ribose 5-phosphate. This chain is Deoxyribose-phosphate aldolase, found in Corynebacterium jeikeium (strain K411).